The following is a 485-amino-acid chain: Glutamyl-tRNA(Gln) amidotransferase subunit A (485 aa).

Catalysis depends on charge relay system residues Lys79 and Ser154. The active-site Acyl-ester intermediate is the Ser178.

It belongs to the amidase family. GatA subfamily. As to quaternary structure, heterotrimer of A, B and C subunits.

The enzyme catalyses L-glutamyl-tRNA(Gln) + L-glutamine + ATP + H2O = L-glutaminyl-tRNA(Gln) + L-glutamate + ADP + phosphate + H(+). Functionally, allows the formation of correctly charged Gln-tRNA(Gln) through the transamidation of misacylated Glu-tRNA(Gln) in organisms which lack glutaminyl-tRNA synthetase. The reaction takes place in the presence of glutamine and ATP through an activated gamma-phospho-Glu-tRNA(Gln). The protein is Glutamyl-tRNA(Gln) amidotransferase subunit A of Desulforamulus reducens (strain ATCC BAA-1160 / DSM 100696 / MI-1) (Desulfotomaculum reducens).